The following is a 571-amino-acid chain: MSTAGDDAVGVPPACGGRSDAVGVPQLARESGAMRDQDCSGELLRSPTHNGHLLVGALKRHQNKPVLFLGDTRLTGGQLADRISQYIQAFEALGAGTGVAVGLLSLNRPEVLMIIGAGQARGYRRTALHPLGSLADHAYVLNDAGISSLIIDPNPMFVERALALLEQVDSLQQILTIGPVPDALKHVAVDLSAEAAKYQPQPLVAADLPPDQVIGLTYTGGTTGKPKGVIGTAQSIATMTSIQLAEWEWPANPRFLMCTPLSHAGAAFFTPTVIKGGEMIVLAKFDPAEVLRIIEEQRITATMLVPSMLYALLDHPDSHTRDLSSLETVYYGASAINPVRLAEAIRRFGPIFAQYYGQSEAPMVITYLAKGDHDEKRLTSCGRPTLFARVALLDEHGKPVKQGEVGEICVSGPLLAGGYWNLPDETSRTFKDGWLHTGDLAREDSDGFYYIVDRVKDMIVTGGFNVFPREVEDVVAEHPAVAQVCVVGAPDEKWGEAVTAVVVLRSNAARDEPAIEAMTAEIQAAVKQRKGSVQAPKRVVVVDSLPLTGLGKPDKKAVRARFWEGAGRAVG.

Residues 1–22 are disordered; sequence MSTAGDDAVGVPPACGGRSDAV.

Belongs to the ATP-dependent AMP-binding enzyme family.

It carries out the reaction a medium-chain fatty acid + ATP + CoA = a medium-chain fatty acyl-CoA + AMP + diphosphate. It catalyses the reaction a long-chain fatty acid + ATP + CoA = a long-chain fatty acyl-CoA + AMP + diphosphate. The catalysed reaction is hexanoate + ATP + CoA = hexanoyl-CoA + AMP + diphosphate. The enzyme catalyses dodecanoate + ATP + CoA = dodecanoyl-CoA + AMP + diphosphate. It carries out the reaction hexadecanoate + ATP + CoA = hexadecanoyl-CoA + AMP + diphosphate. It functions in the pathway lipid metabolism; fatty acid metabolism. Its function is as follows. Catalyzes the activation of medium/long-chain fatty acids as acyl-coenzyme A (acyl-CoA). The protein is Medium/long-chain-fatty-acid--CoA ligase FadD8 of Mycobacterium tuberculosis (strain ATCC 25618 / H37Rv).